A 318-amino-acid chain; its full sequence is Ribosomal RNA small subunit methyltransferase H (318 aa).

S-adenosyl-L-methionine contacts are provided by residues alanine 38–histidine 40, aspartate 57, leucine 91, aspartate 105, and glutamine 112.

The protein belongs to the methyltransferase superfamily. RsmH family.

Its subcellular location is the cytoplasm. It carries out the reaction cytidine(1402) in 16S rRNA + S-adenosyl-L-methionine = N(4)-methylcytidine(1402) in 16S rRNA + S-adenosyl-L-homocysteine + H(+). Its function is as follows. Specifically methylates the N4 position of cytidine in position 1402 (C1402) of 16S rRNA. The chain is Ribosomal RNA small subunit methyltransferase H from Clavibacter sepedonicus (Clavibacter michiganensis subsp. sepedonicus).